The chain runs to 152 residues: Succinate dehydrogenase [ubiquinone] cytochrome b small subunit A, mitochondrial (152 aa).

The N-terminal 21 residues, methionine 1–serine 21, are a transit peptide targeting the mitochondrion. Topologically, residues leucine 22 to serine 56 are mitochondrial matrix. Residues leucine 57–leucine 78 traverse the membrane as a helical segment. Over tyrosine 79–alanine 83 the chain is Mitochondrial intermembrane. A helical transmembrane segment spans residues valine 84–valine 104. Residue histidine 95 coordinates heme b. Residues threonine 105–lysine 113 lie on the Mitochondrial matrix side of the membrane. Tyrosine 107 lines the a ubiquinone pocket. Residues isoleucine 114–phenylalanine 135 traverse the membrane as a helical segment. Residues asparagine 136 to leucine 152 are Mitochondrial intermembrane-facing.

It belongs to the CybS family. As to quaternary structure, component of complex II composed of four subunits: the flavoprotein (FP) SDHA, iron-sulfur protein (IP) SDHB, and a cytochrome b560 composed of SDHC and SDHD.

It is found in the mitochondrion inner membrane. It functions in the pathway carbohydrate metabolism; tricarboxylic acid cycle. Its function is as follows. Membrane-anchoring subunit of succinate dehydrogenase (SDH) that is involved in complex II of the mitochondrial electron transport chain and is responsible for transferring electrons from succinate to ubiquinone (coenzyme Q). SDH also oxidizes malate to the non-canonical enol form of oxaloacetate, enol-oxaloacetate. Enol-oxaloacetate, which is a potent inhibitor of the succinate dehydrogenase activity, is further isomerized into keto-oxaloacetate. The polypeptide is Succinate dehydrogenase [ubiquinone] cytochrome b small subunit A, mitochondrial (sdhd-a) (Xenopus laevis (African clawed frog)).